The sequence spans 204 residues: Lysozyme G (204 aa).

The N-terminal stretch at 1–19 (MHLMLVLLGLAALLGTSQS) is a signal peptide. Cystine bridges form between Cys-23/Cys-79 and Cys-37/Cys-48. Active-site residues include Glu-92 and Asp-105.

Belongs to the glycosyl hydrolase 23 family.

It localises to the secreted. It carries out the reaction Hydrolysis of (1-&gt;4)-beta-linkages between N-acetylmuramic acid and N-acetyl-D-glucosamine residues in a peptidoglycan and between N-acetyl-D-glucosamine residues in chitodextrins.. Functionally, has bacteriolytic activity against M.luteus. This chain is Lysozyme G, found in Dromaius novaehollandiae (Emu).